The sequence spans 143 residues: Endoribonuclease YbeY (143 aa).

Residues histidine 109, histidine 113, and histidine 119 each contribute to the Zn(2+) site.

This sequence belongs to the endoribonuclease YbeY family. Requires Zn(2+) as cofactor.

The protein resides in the cytoplasm. Its function is as follows. Single strand-specific metallo-endoribonuclease involved in late-stage 70S ribosome quality control and in maturation of the 3' terminus of the 16S rRNA. This is Endoribonuclease YbeY from Carboxydothermus hydrogenoformans (strain ATCC BAA-161 / DSM 6008 / Z-2901).